A 408-amino-acid polypeptide reads, in one-letter code: Hepatocyte nuclear factor 4-gamma (408 aa).

The nuclear receptor DNA-binding region spans N9 to N84. NR C4-type zinc fingers lie at residues C12–C32 and C48–C72. S94 bears the Phosphoserine mark. Residues S99–G328 form the NR LBD domain. A disordered region spans residues I368 to A390. T370 and T373 each carry phosphothreonine. S377 carries the phosphoserine modification.

The protein belongs to the nuclear hormone receptor family. NR2 subfamily. Expressed in pancreas, kidney, small intestine and testis. Weakly expressed in colon. Not expressed in liver, skeletal muscle, lung, placenta, brain, heart, peripheral blood, ovary, prostate, thymus and spleen.

The protein localises to the nucleus. Functionally, transcription factor. Has a lower transcription activation potential than HNF4-alpha. In Homo sapiens (Human), this protein is Hepatocyte nuclear factor 4-gamma (HNF4G).